The sequence spans 207 residues: Superoxide dismutase [Fe] (207 aa).

Fe cation contacts are provided by histidine 28, histidine 76, aspartate 160, and histidine 164.

It belongs to the iron/manganese superoxide dismutase family. Homotetramer. Requires Fe cation as cofactor.

It is found in the secreted. The catalysed reaction is 2 superoxide + 2 H(+) = H2O2 + O2. In terms of biological role, destroys superoxide anion radicals which are normally produced within the cells and which are toxic to biological systems. The protein is Superoxide dismutase [Fe] (sodB) of Mycobacterium tuberculosis (strain CDC 1551 / Oshkosh).